A 370-amino-acid chain; its full sequence is UPF0284 protein PCC7424_2681 (370 aa).

It belongs to the UPF0284 family.

The protein is UPF0284 protein PCC7424_2681 of Gloeothece citriformis (strain PCC 7424) (Cyanothece sp. (strain PCC 7424)).